A 453-amino-acid polypeptide reads, in one-letter code: uncharacterized protein (453 aa).

In terms of domain architecture, YrdC-like spans 276–437; it reads IAQTKQIKAL…TKQIVRGSST (162 aa).

This is an uncharacterized protein from Mycoplasma pneumoniae (strain ATCC 29342 / M129 / Subtype 1) (Mycoplasmoides pneumoniae).